The sequence spans 131 residues: Fumarate reductase subunit C (131 aa).

Helical transmembrane passes span 30 to 50 (EGTA…LFAL), 63 to 83 (FLQN…ALLH), and 109 to 129 (IIKS…FVAL).

Belongs to the FrdC family. As to quaternary structure, part of an enzyme complex containing four subunits: a flavoprotein (FrdA), an iron-sulfur protein (FrdB), and two hydrophobic anchor proteins (FrdC and FrdD).

Its subcellular location is the cell inner membrane. Its function is as follows. Two distinct, membrane-bound, FAD-containing enzymes are responsible for the catalysis of fumarate and succinate interconversion; fumarate reductase is used in anaerobic growth, and succinate dehydrogenase is used in aerobic growth. Anchors the catalytic components of the fumarate reductase complex to the cell inner membrane, binds quinones. The sequence is that of Fumarate reductase subunit C from Escherichia coli O17:K52:H18 (strain UMN026 / ExPEC).